A 285-amino-acid chain; its full sequence is Diaminopimelate epimerase (285 aa).

The substrate site is built by asparagine 15 and asparagine 68. The Proton donor role is filled by cysteine 77. Substrate contacts are provided by residues 78-79 (GN), asparagine 165, asparagine 201, and 219-220 (ER). Cysteine 228 functions as the Proton acceptor in the catalytic mechanism. Residue 229–230 (GT) coordinates substrate.

The protein belongs to the diaminopimelate epimerase family. As to quaternary structure, homodimer.

It is found in the cytoplasm. The catalysed reaction is (2S,6S)-2,6-diaminopimelate = meso-2,6-diaminopimelate. The protein operates within amino-acid biosynthesis; L-lysine biosynthesis via DAP pathway; DL-2,6-diaminopimelate from LL-2,6-diaminopimelate: step 1/1. Catalyzes the stereoinversion of LL-2,6-diaminopimelate (L,L-DAP) to meso-diaminopimelate (meso-DAP), a precursor of L-lysine and an essential component of the bacterial peptidoglycan. This chain is Diaminopimelate epimerase, found in Synechococcus sp. (strain JA-2-3B'a(2-13)) (Cyanobacteria bacterium Yellowstone B-Prime).